A 101-amino-acid chain; its full sequence is Apolipoprotein C-II (101 aa).

A signal peptide spans 1 to 22; that stretch reads MGTRYLLVLLLVLLVLGFEVQG. The tract at residues 66–74 is lipid binding; it reads TMDEKIRDI. Positions 78-101 are lipoprotein lipase cofactor; it reads STAAVSTYAGIFTDQLLSMLKGDS.

The protein belongs to the apolipoprotein C2 family. In terms of processing, proapolipoprotein C-II is synthesized as a sialic acid containing glycoprotein which is subsequently desialylated prior to its proteolytic processing. Proapolipoprotein C-II, the major form found in plasma undergoes proteolytic cleavage of its N-terminal hexapeptide to generate apolipoprotein C-II, which occurs as the minor form in plasma. As to expression, highly expressed in the liver. Moderately expressed in the ileum, jejunum and ovary.

It is found in the secreted. In terms of biological role, component of chylomicrons, very low-density lipoproteins (VLDL), low-density lipoproteins (LDL), and high-density lipoproteins (HDL) in plasma. Plays an important role in lipoprotein metabolism as an activator of lipoprotein lipase. Both proapolipoprotein C-II and apolipoprotein C-II can activate lipoprotein lipase. This chain is Apolipoprotein C-II (APOC2), found in Canis lupus familiaris (Dog).